The following is a 694-amino-acid chain: Rabphilin-3A (694 aa).

Over residues 1–12 (MTDTVFSNSSNR) the composition is skewed to polar residues. The interval 1–51 (MTDTVFSNSSNRWMYPSDRPLQSNDKEQLQAGWSVHPGGQPDRQRKQEELT) is disordered. Positions 44 to 160 (QRKQEELTDE…KRSGAWFFKG (117 aa)) constitute a RabBD domain. An FYVE-type zinc finger spans residues 92–148 (GDGVNRCILCGEQLGMLGSACVVCEDCKKNVCTKCGVETNNRLHSVWLCKICIEQRE). Positions 98, 101, 115, 118, 123, 126, 140, and 143 each coordinate Zn(2+). A disordered region spans residues 166–388 (LPQPMPIKKT…EEEANSYDSD (223 aa)). Positions 177 to 186 (PQQPVSEPAA) are enriched in low complexity. Residues 202–211 (ARGDSEDRRG) show a composition bias toward basic and acidic residues. Arg226 carries the post-translational modification Omega-N-methylarginine. Ser272 is subject to Phosphoserine. The segment covering 352–370 (PSGPYSQASAAAPQPAAAR) has biased composition (low complexity). Residues 375-388 (PEEEEEEANSYDSD) show a composition bias toward acidic residues. Residues 392 to 514 (TLGALEFSLL…KPNQRKNFNI (123 aa)) enclose the C2 1 domain. 14 residues coordinate Ca(2+): Met422, Asp423, Asp429, Asp484, Glu485, Asp486, Glu492, Glu539, Asp581, Asp587, Asp641, Tyr642, Asp643, and Asp649. The C2 2 domain maps to 550-683 (ERGKILVSLM…NKDKKIERWH (134 aa)). A phosphoserine mark is found at Ser692 and Ser693.

As to quaternary structure, interacts with RAB3B, RAB3C, RAB3D, RAB8A, RAB27A and RAB27B. Interacts with RAB3A; this interaction recruits RPH3A to synaptic vesicules. Interacts (via C2B domain) with SNAP25. Interacts with deubiquitinating enzyme CAND1; this interaction results in the deubiquitination of RPH3A. Interacts with GRIN2A and DLG4; this ternary complex regulates NMDA receptor composition at postsynaptic membranes. Interacts with SNCA. Ca(2+) serves as cofactor. Post-translationally, ubiquitinated. Deubiquitinated by CAND1 to prevent its degradation.

It is found in the cytoplasmic vesicle. It localises to the secretory vesicle. The protein localises to the synaptic vesicle membrane. Its subcellular location is the cell projection. The protein resides in the dendritic spine. It is found in the postsynaptic cell membrane. It localises to the membrane. Plays an essential role in docking and fusion steps of regulated exocytosis. At the presynaptic level, RPH3A is recruited by RAB3A to the synaptic vesicle membrane in a GTP-dependent manner where it modulates synaptic vesicle trafficking and calcium-triggered neurotransmitter release. In the post-synaptic compartment, forms a ternary complex with GRIN2A and DLG4 and regulates NMDA receptor stability. Also plays a role in the exocytosis of arginine vasopressin hormone. The protein is Rabphilin-3A (RPH3A) of Homo sapiens (Human).